A 212-amino-acid chain; its full sequence is Putative inactive 6-phospho-alpha-glucosidase (212 aa).

NAD(+) is bound at residue 4-70; it reads FSVVVAGGGS…PDIAFSYTTD (67 aa). Mn(2+)-binding residues include cysteine 169 and histidine 200.

It belongs to the glycosyl hydrolase 4 family.

The sequence is that of Putative inactive 6-phospho-alpha-glucosidase from Escherichia coli (strain K12).